A 379-amino-acid polypeptide reads, in one-letter code: UDP-4-amino-4-deoxy-L-arabinose--oxoglutarate aminotransferase (379 aa).

At Lys182 the chain carries N6-(pyridoxal phosphate)lysine.

It belongs to the DegT/DnrJ/EryC1 family. ArnB subfamily. Homodimer. Requires pyridoxal 5'-phosphate as cofactor.

It carries out the reaction UDP-4-amino-4-deoxy-beta-L-arabinose + 2-oxoglutarate = UDP-beta-L-threo-pentopyranos-4-ulose + L-glutamate. It participates in nucleotide-sugar biosynthesis; UDP-4-deoxy-4-formamido-beta-L-arabinose biosynthesis; UDP-4-deoxy-4-formamido-beta-L-arabinose from UDP-alpha-D-glucuronate: step 2/3. Its pathway is bacterial outer membrane biogenesis; lipopolysaccharide biosynthesis. In terms of biological role, catalyzes the conversion of UDP-4-keto-arabinose (UDP-Ara4O) to UDP-4-amino-4-deoxy-L-arabinose (UDP-L-Ara4N). The modified arabinose is attached to lipid A and is required for resistance to polymyxin and cationic antimicrobial peptides. The protein is UDP-4-amino-4-deoxy-L-arabinose--oxoglutarate aminotransferase of Klebsiella pneumoniae subsp. pneumoniae (strain ATCC 700721 / MGH 78578).